A 316-amino-acid chain; its full sequence is Protein lifeguard 2 (316 aa).

The interval 1–53 (MTQGKLSVANKAPGTEGQQQVHGEKKEAPAVPSAPPSYEEATSGEGMKAGAFP) is disordered. Transmembrane regions (helical) follow at residues 106-126 (VYTILLIQLLVTLAVVALFTF), 138-158 (PGWYWASYAVFFATYLTLACC), and 165-185 (FPWNLILLTVFTLSMAYLTGM). Residue asparagine 191 is glycosylated (N-linked (GlcNAc...) asparagine). A run of 4 helical transmembrane segments spans residues 194–214 (SVLLCLGITALVCLSVTVFSF), 225–245 (GVLFVLLMTLFFSGLILAILL), 250–270 (VPWLHAVYAALGAGVFTLFLA), and 290–310 (IFGALNIYLDIIYIFTFFLQL).

This sequence belongs to the BI1 family. LFG subfamily. Interacts with FAS/TNFRSF6 and BAX. In terms of tissue distribution, highly expressed in breast carcinoma tissues. Enhanced expression correlates with the grade of the tumor (grade II/grade III) in primary breast tumors (at protein level). Widely expressed. Expressed at high levels in the brain especially in the hippocampus.

The protein localises to the cell membrane. It is found in the membrane raft. It localises to the postsynaptic cell membrane. Antiapoptotic protein which protects cells uniquely from Fas-induced apoptosis. Regulates Fas-mediated apoptosis in neurons by interfering with caspase-8 activation. May play a role in cerebellar development by affecting cerebellar size, internal granular layer (IGL) thickness, and Purkinje cell (PC) development. This chain is Protein lifeguard 2 (FAIM2), found in Homo sapiens (Human).